Here is a 382-residue protein sequence, read N- to C-terminus: RNA binding protein fox-1 homolog 1 (382 aa).

The tract at residues 1–121 (MNCEREQLRG…NKSQPKRLHV (121 aa)) is disordered. Polar residues predominate over residues 70-87 (QTHSEQSPADTSAQTVSG). Low complexity predominate over residues 88–99 (TATQTDDAAPTD). Over residues 100 to 113 (GQPQTQPSENTENK) the composition is skewed to polar residues. Residues 117-193 (KRLHVSNIPF…RKIEVNNATA (77 aa)) form the RRM domain. Arg-317 is subject to Asymmetric dimethylarginine. Residues 357–382 (MPQGSSPSTDFRGAKLHTSRPLLSGS) form a disordered region.

In terms of assembly, binds to the C-terminus of ATXN2.

The protein resides in the nucleus. Its subcellular location is the cytoplasm. RNA-binding protein that regulates alternative splicing events by binding to 5'-UGCAUGU-3' elements. Prevents binding of U2AF2 to the 3'-splice site. Regulates alternative splicing of tissue-specific exons and of differentially spliced exons during erythropoiesis. The sequence is that of RNA binding protein fox-1 homolog 1 (RBFOX1) from Pongo abelii (Sumatran orangutan).